Here is a 268-residue protein sequence, read N- to C-terminus: Shikimate dehydrogenase (NADP(+)) (268 aa).

Shikimate contacts are provided by residues 13-15 and Thr60; that span reads SLS. Lys64 acts as the Proton acceptor in catalysis. Position 76 (Glu76) interacts with NADP(+). Shikimate contacts are provided by Asn85 and Asp100. Residues 124-128, 148-153, and Ile209 each bind NADP(+); these read GAGGA and NRTMAR. Tyr211 contacts shikimate. Gly232 lines the NADP(+) pocket.

This sequence belongs to the shikimate dehydrogenase family. Homodimer.

It carries out the reaction shikimate + NADP(+) = 3-dehydroshikimate + NADPH + H(+). Its pathway is metabolic intermediate biosynthesis; chorismate biosynthesis; chorismate from D-erythrose 4-phosphate and phosphoenolpyruvate: step 4/7. Functionally, involved in the biosynthesis of the chorismate, which leads to the biosynthesis of aromatic amino acids. Catalyzes the reversible NADPH linked reduction of 3-dehydroshikimate (DHSA) to yield shikimate (SA). The polypeptide is Shikimate dehydrogenase (NADP(+)) (Staphylococcus aureus (strain bovine RF122 / ET3-1)).